Reading from the N-terminus, the 186-residue chain is Ribosome-recycling factor (186 aa).

Belongs to the RRF family.

The protein resides in the cytoplasm. Its function is as follows. Responsible for the release of ribosomes from messenger RNA at the termination of protein biosynthesis. May increase the efficiency of translation by recycling ribosomes from one round of translation to another. In Rickettsia peacockii (strain Rustic), this protein is Ribosome-recycling factor.